The primary structure comprises 482 residues: Pup--protein ligase (482 aa).

Residue glutamate 16 coordinates Mg(2+). Arginine 60 lines the ATP pocket. Mg(2+) is bound at residue tyrosine 62. The active-site Proton acceptor is aspartate 64. Residue glutamate 70 participates in Mg(2+) binding. ATP-binding residues include threonine 73 and tryptophan 440.

Belongs to the Pup ligase/Pup deamidase family. Pup-conjugating enzyme subfamily.

It catalyses the reaction ATP + [prokaryotic ubiquitin-like protein]-L-glutamate + [protein]-L-lysine = ADP + phosphate + N(6)-([prokaryotic ubiquitin-like protein]-gamma-L-glutamyl)-[protein]-L-lysine.. Its pathway is protein degradation; proteasomal Pup-dependent pathway. It participates in protein modification; protein pupylation. Catalyzes the covalent attachment of the prokaryotic ubiquitin-like protein modifier Pup to the proteasomal substrate proteins, thereby targeting them for proteasomal degradation. This tagging system is termed pupylation. The ligation reaction involves the side-chain carboxylate of the C-terminal glutamate of Pup and the side-chain amino group of a substrate lysine. The sequence is that of Pup--protein ligase from Corynebacterium glutamicum (strain R).